Reading from the N-terminus, the 219-residue chain is Transmembrane emp24 domain-containing protein 10 (219 aa).

The first 31 residues, 1–31, serve as a signal peptide directing secretion; the sequence is MSGLSGPLSWPGPLLSALLFLFLLGPSSVLG. The required for interaction with STX17 stretch occupies residues 1 to 142; it reads MSGLSGPLSW…KNYEEIAKVE (142 aa). Residues 32 to 185 lie on the Lumenal side of the membrane; it reads ISFHLPVNSR…RDTNESTNTR (154 aa). Positions 41–193 constitute a GOLD domain; the sequence is RKCLREEIHK…TRVLYFSIFS (153 aa). Residues 147 to 178 are required for TMED10 and TMED2 cis-Golgi network localization; the sequence is LEVELRRLEDLSESIVNDFAYMKKREEEMRDT. Residues Arg171 and Arg176 each carry the dimethylated arginine modification. Asn179 carries N-linked (GlcNAc...) asparagine glycosylation. The helical transmembrane segment at 186–206 threads the bilayer; that stretch reads VLYFSIFSMFCLIGLATWQVF. The interval 204-219 is interaction with COPG1; it reads QVFYLRRFFKAKKLIE. The Cytoplasmic portion of the chain corresponds to 207 to 219; it reads YLRRFFKAKKLIE. Residues 207 to 219 form an interaction with ARF1 and IL1B region; sequence YLRRFFKAKKLIE. The COPII vesicle coat-binding motif lies at 211 to 212; sequence FF. The COPI vesicle coat-binding motif lies at 211–219; sequence FFKAKKLIE.

Belongs to the EMP24/GP25L family. Predominantly dimeric and to a lesser extent monomeric in the ER. Monomer and dimer in ERGIC and cis-Golgi network. Forms homooligomer (via GOLD domain); the assembly is promoted by direct binding with leaderless cargos and may form a protein channel that facilitates cargo entry into the ERGIC. Forms heterooligomeric complexes with other members of the p24 family such as TMED2, TMED7 and TMED9. Interacts (via GOLD domain) with TMED2 (via GOLD domain); the complex is required for export of TMED10 from the ER to the cis-Golgi network; the complex is proposed to be involved in cis-Golgi network dynamics and / or biogenesis. Associates with the COPI vesicle coat subunits (coatomer). Tetramerization of the cytoplasmic domain at the Golgi membrane in vitro; the complex is proposed to interact with COPI coatomer and induce budding of the vesicles. Interacts with COPG1; the interaction involves TMED10 homodimer. Interacts with ARF1 (GDP-bound); the interaction probably involves a TMED10 oligomer. Interacts with SEC23A, SEC24B, SEC24C and SEC24D components of the coat protein complex II/COPII, indicative of an association of TMED10 with the COPII vesicle coat. Interacts with CD59. Interacts with MPPE1/PGAP5; the complex might recruit and sort GPI-anchored proteins to the ER-exit site, or the interaction might lead to recycling of PGAP5 between the ER and the Golgi. Interacts with F2LR1/PAR2. Interacts with KDELR2/ERD2; the interaction is disrupted by KDELR2 ligand. Found in a complex composed at least of SURF4, TMED2 and TMED10. Associates with the presenilin-dependent gamma-secretase complex. Interacts with STX17; the interaction is direct. Interacts with IL-1; the interaction is direct. Interacts with RAB21 (active GTP-bound form); the interaction is indirect and regulates TMED10 abundance and localization at the Golgi. As to expression, ubiquitous.

Its subcellular location is the endoplasmic reticulum membrane. The protein resides in the endoplasmic reticulum-Golgi intermediate compartment membrane. The protein localises to the golgi apparatus membrane. It localises to the golgi apparatus. It is found in the cis-Golgi network membrane. Its subcellular location is the trans-Golgi network membrane. The protein resides in the cytoplasmic vesicle. The protein localises to the secretory vesicle membrane. It localises to the cell membrane. It is found in the melanosome. Functionally, cargo receptor involved in protein vesicular trafficking and quality control in the endoplasmic reticulum (ER) and Golgi. The p24 protein family is a group of transmembrane proteins that bind coat protein complex I/COPI and coat protein complex II/COPII involved in vesicular trafficking between the membranes. Acts at the lumenal side for incorporation of secretory cargo molecules into transport vesicles and involved in vesicle coat formation at the cytoplasmic side. Mainly functions in the early secretory pathway and cycles between the ER, ER-Golgi intermediate compartment (ERGIC) and Golgi, mediating cargo transport through COPI and COPII-coated vesicles. In COPII vesicle-mediated anterograde transport, involved in the transport of GPI-anchored proteins by acting together with TMED2 as their cargo receptor; the function specifically implies SEC24C and SEC24D of the COPII vesicle coat and lipid raft-like microdomains of the ER. Recognizes GPI anchors structural remodeled in the ER by the GPI inositol-deacylase/PGAP1 and the metallophosphoesterase MPPE1/PGAP5. In COPI vesicle-mediated retrograde transport, involved in the biogenesis of COPI vesicles and vesicle coat recruitment. Involved in trafficking of amyloid beta A4 protein and soluble APP-beta release (independent from the modulation of gamma-secretase activity). Involved in the KDELR2-mediated retrograde transport of the toxin A subunit (CTX-A-K63)together with COPI and the COOH terminus of KDELR2. On Golgi membranes, acts as a primary receptor for ARF1-GDP, a GTP-binding protein involved in COPI-vesicle formation. Increases coatomer-dependent GTPase-activating activity of ARFGAP2 which mediates the hydrolysis of ARF1-bound GTP and therefore modulates protein trafficking from the Golgi apparatus. Involved in the exocytic trafficking of G protein-coupled receptors F2LR1/PAR2 (trypsin and tryspin-like enzyme receptor), OPRM1 (opioid receptor) and P2RY4 (UTD and UDP receptor) from the Golgi to the plasma membrane, thus contributing to receptor resensitization. In addition to its cargo receptor activity, may also act as a protein channel after oligomerization, facilitating the post-translational entry of leaderless cytoplasmic cargo into the ERGIC. Involved in the translocation into ERGIC, the vesicle entry and the secretion of leaderless cargos (lacking the secretion signal sequence), including the mature form of interleukin 1/IL-1 family members, the alpha-crystallin B chain HSPB5, the carbohydrate-binding proteins galectin-1/LGALS1 and galectin-3/LGALS3, the microtubule-associated protein Tau/MAPT, and the annexin A1/ANXA1; the translocation process is dependent on cargo protein unfolding and enhanced by chaperones HSP90AB1 and HSP90B1/GRP9. Could also associates with the presenilin-dependent gamma-secretase complex in order to regulate gamma-cleavages of the amyloid beta A4 protein to yield amyloid-beta 40/Abeta40. This is Transmembrane emp24 domain-containing protein 10 from Rattus norvegicus (Rat).